Consider the following 352-residue polypeptide: Peptide chain release factor 1 (352 aa).

The residue at position 233 (Q233) is an N5-methylglutamine. The segment at 288-309 (NAKDRKEQVGSGDRSERIRTYN) is disordered. Residues 289 to 306 (AKDRKEQVGSGDRSERIR) show a composition bias toward basic and acidic residues.

This sequence belongs to the prokaryotic/mitochondrial release factor family. Post-translationally, methylated by PrmC. Methylation increases the termination efficiency of RF1.

It is found in the cytoplasm. Peptide chain release factor 1 directs the termination of translation in response to the peptide chain termination codons UAG and UAA. The chain is Peptide chain release factor 1 (prfA) from Helicobacter pylori (strain J99 / ATCC 700824) (Campylobacter pylori J99).